The following is a 76-amino-acid chain: MFTLKKSMLLLFFLGTISLSLCEEERSADEDDGEKEVKRGIFSLIKTAAKFVGKNLLKQAGKAGMEHLACKANNQC.

The N-terminal stretch at 1–22 (MFTLKKSMLLLFFLGTISLSLC) is a signal peptide. A propeptide spans 23–37 (EEERSADEDDGEKEV) (removed in mature form). The cysteines at positions 70 and 76 are disulfide-linked.

The protein belongs to the frog skin active peptide (FSAP) family. Esculentin subfamily. Expressed by the skin glands.

Its subcellular location is the secreted. In terms of biological role, antimicrobial peptide. Active against a variety of Gram-negative and Gram-positive bacterial strains. Active against fungi. Shows strong hemolytic activity against human erythrocytes. This Amolops mantzorum (Sichuan torrent frog) protein is Esculentin-2MT2.